The primary structure comprises 219 residues: Charged multivesicular body protein 5 (219 aa).

Residues 22-153 (TNVDGRAESI…EIQEALSRSY (132 aa)) are a coiled coil.

Belongs to the SNF7 family. In terms of assembly, probable peripherally associated component of the endosomal sorting required for transport complex III (ESCRT-III).

It localises to the cytoplasm. It is found in the cytosol. The protein localises to the endosome membrane. Its function is as follows. Probable peripherally associated component of the endosomal sorting required for transport complex III (ESCRT-III) which is involved in multivesicular bodies (MVBs) formation and sorting of endosomal cargo proteins into MVBs. MVBs contain intraluminal vesicles (ILVs) that are generated by invagination and scission from the limiting membrane of the endosome and mostly are delivered to lysosomes enabling degradation of membrane proteins, such as stimulated growth factor receptors, lysosomal enzymes and lipids. This is Charged multivesicular body protein 5 (chmp5) from Xenopus laevis (African clawed frog).